Consider the following 587-residue polypeptide: Prolycopene isomerase 2, chloroplastic (587 aa).

Residues 1–50 (MLCLSLNSSSTSPPKLPLHHSFSRRGIRSWVRSPCVQRKKLGFWSSPKAV) constitute a chloroplast transit peptide.

The protein belongs to the carotenoid/retinoid oxidoreductase family. CrtISO subfamily. The cofactor is NAD(+). It depends on NADP(+) as a cofactor. FAD serves as cofactor. Up-regulated in the flower buds and flower lip tissue, while it is weakly expressed in leaves.

The protein resides in the plastid. It localises to the chloroplast membrane. The catalysed reaction is 7,7',9,9'-tetra-cis-lycopene = all-trans-lycopene. It participates in carotenoid biosynthesis; lycopene biosynthesis. Carotene cis-trans-isomerase that converts 7,9,9'-tri-cis-neurosporene to 9'-cis-neurosporene and 7,9,9',7'-tetra-cis-lycopene (also known as prolycopene) into all-trans-lycopene. Isomerization requires redox-active components, suggesting that isomerization is achieved by a reversible redox reaction acting at specific double bonds. Isomerizes adjacent cis-double bonds at C7 and C9 pairwise into the trans-configuration, but is incapable of isomerizing single cis-double bonds at C9 and C9'. This Oncidium hybrid cultivar (Orchid) protein is Prolycopene isomerase 2, chloroplastic (CRTISO2).